The sequence spans 20 residues: Large ribosomal subunit protein bL31 (20 aa).

Zn(2+) is bound by residues Xaa16 and Xaa18.

It belongs to the bacterial ribosomal protein bL31 family. Type A subfamily. Part of the 50S ribosomal subunit. Zn(2+) serves as cofactor.

Functionally, binds the 23S rRNA. This chain is Large ribosomal subunit protein bL31 (rpmE), found in Ectopseudomonas mendocina (Pseudomonas mendocina).